Reading from the N-terminus, the 208-residue chain is MKDFLQKVNSYIKEAFSAGKYLYDGFTVTFDHLRRRPVTVQYPYEKLIPSERYRGRIHYEFDKCIACEVCVRVCPINLPVVDWVMNKETKKKELRNYSIDFGVCIFCGNCVEYCPTNCLSMTEEYELATFDRHNLNFDNIALGRLPTNVTTDPSVKPLRELAYLPKGVMDPHEVPPSDVRVGKLPEEVYDWMKPKLNDIKNPTVEPNK.

4Fe-4S ferredoxin-type domains follow at residues 55-84 (GRIH…VDWV) and 95-124 (RNYS…MTEE). 8 residues coordinate [4Fe-4S] cluster: Cys-64, Cys-67, Cys-70, Cys-74, Cys-104, Cys-107, Cys-110, and Cys-114.

This sequence belongs to the complex I 23 kDa subunit family. As to quaternary structure, NDH-1 is composed of at least 11 different subunits. [4Fe-4S] cluster is required as a cofactor.

The protein localises to the cellular thylakoid membrane. The catalysed reaction is a plastoquinone + NADH + (n+1) H(+)(in) = a plastoquinol + NAD(+) + n H(+)(out). It catalyses the reaction a plastoquinone + NADPH + (n+1) H(+)(in) = a plastoquinol + NADP(+) + n H(+)(out). NDH-1 shuttles electrons from an unknown electron donor, via FMN and iron-sulfur (Fe-S) centers, to quinones in the respiratory and/or the photosynthetic chain. The immediate electron acceptor for the enzyme in this species is believed to be plastoquinone. Couples the redox reaction to proton translocation, and thus conserves the redox energy in a proton gradient. This is NAD(P)H-quinone oxidoreductase subunit I from Prochlorococcus marinus subsp. pastoris (strain CCMP1986 / NIES-2087 / MED4).